The chain runs to 338 residues: Probable replication factor C subunit 2 (338 aa).

Residue 60–67 (GPPGTGKT) participates in ATP binding.

The protein belongs to the activator 1 small subunits family. Heteropentamer of various rfc subunits that forms a complex (RFC) with PCNA in the presence of ATP.

The protein resides in the nucleus. Functionally, the elongation of primed DNA templates by DNA polymerase delta and epsilon requires the action of the accessory proteins PCNA and activator 1. The polypeptide is Probable replication factor C subunit 2 (rfc2) (Dictyostelium discoideum (Social amoeba)).